We begin with the raw amino-acid sequence, 266 residues long: Hydroxypyruvate/pyruvate aldolase (266 aa).

The Proton acceptor role is filled by H48. E152 and D178 together coordinate a divalent metal cation.

The protein belongs to the HpcH/HpaI aldolase family. A divalent metal cation serves as cofactor.

The enzyme catalyses D-glyceraldehyde + pyruvate = 2-dehydro-3-deoxy-L-galactonate. It catalyses the reaction 2-dehydro-3-deoxy-D-gluconate = D-glyceraldehyde + pyruvate. Aldolase which can catalyze in vitro the aldolisation reaction between hydroxypyruvate (HPA) or pyruvate (PA) and D-glyceraldehyde (D-GA). The condensation of pyruvate and D-glyceraldehyde produces 2-dehydro-3-deoxy-L-galactonate as the major product and 2-dehydro-3-deoxy-D-gluconate. Has weak activity with hydroxypyruvate and D-glyceraldehyde. This Agrobacterium fabrum (strain C58 / ATCC 33970) (Agrobacterium tumefaciens (strain C58)) protein is Hydroxypyruvate/pyruvate aldolase.